The sequence spans 477 residues: Glycogen synthase 1 (477 aa).

Lys-15 contacts ADP-alpha-D-glucose.

It belongs to the glycosyltransferase 1 family. Bacterial/plant glycogen synthase subfamily.

The catalysed reaction is [(1-&gt;4)-alpha-D-glucosyl](n) + ADP-alpha-D-glucose = [(1-&gt;4)-alpha-D-glucosyl](n+1) + ADP + H(+). The protein operates within glycan biosynthesis; glycogen biosynthesis. In terms of biological role, synthesizes alpha-1,4-glucan chains using ADP-glucose. The polypeptide is Glycogen synthase 1 (glgA1) (Synechocystis sp. (strain ATCC 27184 / PCC 6803 / Kazusa)).